The chain runs to 172 residues: Adenine phosphoribosyltransferase (172 aa).

Belongs to the purine/pyrimidine phosphoribosyltransferase family. Homodimer.

The protein resides in the cytoplasm. It carries out the reaction AMP + diphosphate = 5-phospho-alpha-D-ribose 1-diphosphate + adenine. It functions in the pathway purine metabolism; AMP biosynthesis via salvage pathway; AMP from adenine: step 1/1. Functionally, catalyzes a salvage reaction resulting in the formation of AMP, that is energically less costly than de novo synthesis. The polypeptide is Adenine phosphoribosyltransferase (Pediococcus pentosaceus (strain ATCC 25745 / CCUG 21536 / LMG 10740 / 183-1w)).